The sequence spans 201 residues: FMN reductase (NADH) RutF 1 (201 aa).

Residues 167 to 195 (PRAPRSGSAPAEPARAARAVGARPAEGPA) are compositionally biased toward low complexity. The tract at residues 167–201 (PRAPRSGSAPAEPARAARAVGARPAEGPALALRSA) is disordered.

It belongs to the non-flavoprotein flavin reductase family. RutF subfamily.

The catalysed reaction is FMNH2 + NAD(+) = FMN + NADH + 2 H(+). In terms of biological role, catalyzes the reduction of FMN to FMNH2 which is used to reduce pyrimidine by RutA via the Rut pathway. The protein is FMN reductase (NADH) RutF 1 of Methylorubrum extorquens (strain CM4 / NCIMB 13688) (Methylobacterium extorquens).